Here is a 128-residue protein sequence, read N- to C-terminus: Aspartate 1-decarboxylase (128 aa).

Ser-25 serves as the catalytic Schiff-base intermediate with substrate; via pyruvic acid. At Ser-25 the chain carries Pyruvic acid (Ser). Thr-57 contacts substrate. Tyr-58 functions as the Proton donor in the catalytic mechanism. Position 73 to 75 (Gly-73 to Ala-75) interacts with substrate.

The protein belongs to the PanD family. In terms of assembly, heterooctamer of four alpha and four beta subunits. Pyruvate is required as a cofactor. In terms of processing, is synthesized initially as an inactive proenzyme, which is activated by self-cleavage at a specific serine bond to produce a beta-subunit with a hydroxyl group at its C-terminus and an alpha-subunit with a pyruvoyl group at its N-terminus.

It is found in the cytoplasm. The catalysed reaction is L-aspartate + H(+) = beta-alanine + CO2. The protein operates within cofactor biosynthesis; (R)-pantothenate biosynthesis; beta-alanine from L-aspartate: step 1/1. Catalyzes the pyruvoyl-dependent decarboxylation of aspartate to produce beta-alanine. This Burkholderia ambifaria (strain ATCC BAA-244 / DSM 16087 / CCUG 44356 / LMG 19182 / AMMD) (Burkholderia cepacia (strain AMMD)) protein is Aspartate 1-decarboxylase.